Here is a 628-residue protein sequence, read N- to C-terminus: DNA mismatch repair protein MutL (628 aa).

Residues 332–416 are disordered; the sequence is PTSAMPAPGN…ASTAPPLSEE (85 aa). The segment covering 375–396 has biased composition (polar residues); sequence EGSSRSDVPYPSASQVTETTDS.

Belongs to the DNA mismatch repair MutL/HexB family.

This protein is involved in the repair of mismatches in DNA. It is required for dam-dependent methyl-directed DNA mismatch repair. May act as a 'molecular matchmaker', a protein that promotes the formation of a stable complex between two or more DNA-binding proteins in an ATP-dependent manner without itself being part of a final effector complex. The sequence is that of DNA mismatch repair protein MutL from Syntrophotalea carbinolica (strain DSM 2380 / NBRC 103641 / GraBd1) (Pelobacter carbinolicus).